The following is a 459-amino-acid chain: Probable 3-ketoacyl-CoA synthase 14 (459 aa).

Positions 1–25 (MFIAMADFKLLLLILILLSLFELDL) are cleaved as a signal peptide. The helical transmembrane segment at 32–52 (FFSPFPVKIGLLLISIFFYAY) threads the bilayer. The 283-residue stretch at 52–334 (YSTTRSKPVY…FILFLVKSKL (283 aa)) folds into the FAE domain. Catalysis depends on residues His268, His352, His356, His385, and Asn389.

Belongs to the thiolase-like superfamily. Chalcone/stilbene synthases family. As to expression, expressed in siliques.

The protein resides in the membrane. It carries out the reaction a very-long-chain acyl-CoA + malonyl-CoA + H(+) = a very-long-chain 3-oxoacyl-CoA + CO2 + CoA. Its pathway is lipid metabolism; fatty acid biosynthesis. The protein is Probable 3-ketoacyl-CoA synthase 14 of Arabidopsis thaliana (Mouse-ear cress).